A 590-amino-acid polypeptide reads, in one-letter code: Beta-(1--&gt;2)glucan export ATP-binding/permease protein NdvA (590 aa).

Positions 21-301 (VALICGANVA…MSAFANQISE (281 aa)) constitute an ABC transmembrane type-1 domain. Transmembrane regions (helical) follow at residues 22 to 42 (ALIC…PIMF), 55 to 75 (VFST…AFVL), 136 to 156 (QHLS…SMDV), 158 to 178 (MSMV…LVMK), 248 to 268 (LSST…VTHG), and 275 to 295 (VIAF…MSAF). Positions 335–569 (VRFEDVGFEF…NGRFASLLRA (235 aa)) constitute an ABC transporter domain. 368 to 375 (GPTGAGKT) contributes to the ATP binding site.

The protein belongs to the ABC transporter superfamily. Beta-(1--&gt;2)glucan exporter (TC 3.A.1.108.1) family. As to quaternary structure, homodimer.

The protein resides in the cell inner membrane. It catalyses the reaction [(1-&gt;2)-beta-D-glucosyl](n)(in) + ATP + H2O = [(1-&gt;2)-beta-D-glucosyl](n)(out) + ADP + phosphate + H(+). Its function is as follows. Involved in beta-(1--&gt;2)glucan export. Transmembrane domains (TMD) form a pore in the inner membrane and the ATP-binding domain (NBD) is responsible for energy generation. This chain is Beta-(1--&gt;2)glucan export ATP-binding/permease protein NdvA, found in Mesorhizobium japonicum (strain LMG 29417 / CECT 9101 / MAFF 303099) (Mesorhizobium loti (strain MAFF 303099)).